The sequence spans 439 residues: Tubulin beta chain (439 aa).

GTP is bound by residues Gln11, Glu69, Ser138, Gly142, Thr143, Gly144, Asn204, and Asn226. Position 69 (Glu69) interacts with Mg(2+).

The protein belongs to the tubulin family. Dimer of alpha and beta chains. A typical microtubule is a hollow water-filled tube with an outer diameter of 25 nm and an inner diameter of 15 nM. Alpha-beta heterodimers associate head-to-tail to form protofilaments running lengthwise along the microtubule wall with the beta-tubulin subunit facing the microtubule plus end conferring a structural polarity. Microtubules usually have 13 protofilaments but different protofilament numbers can be found in some organisms and specialized cells. Mg(2+) serves as cofactor.

The protein resides in the cytoplasm. It is found in the cytoskeleton. In terms of biological role, tubulin is the major constituent of microtubules, a cylinder consisting of laterally associated linear protofilaments composed of alpha- and beta-tubulin heterodimers. Microtubules grow by the addition of GTP-tubulin dimers to the microtubule end, where a stabilizing cap forms. Below the cap, tubulin dimers are in GDP-bound state, owing to GTPase activity of alpha-tubulin. This chain is Tubulin beta chain (TUB2), found in Encephalitozoon intestinalis (Microsporidian parasite).